Consider the following 545-residue polypeptide: CTP synthase (545 aa).

An amidoligase domain region spans residues 1–265 (MNGIKHIFIT…DKFVIKHLDL (265 aa)). A CTP-binding site is contributed by Ser-15. Position 15 (Ser-15) interacts with UTP. ATP-binding positions include 16–21 (SIGKGL) and Asp-73. The Mg(2+) site is built by Asp-73 and Glu-141. CTP contacts are provided by residues 148 to 150 (DIE), 188 to 193 (KTKPTQ), and Lys-224. UTP contacts are provided by residues 188-193 (KTKPTQ) and Lys-224. Residues 290–534 (EIAIIGKYTG…VAAALARKEI (245 aa)) form the Glutamine amidotransferase type-1 domain. An L-glutamine-binding site is contributed by Gly-349. Cys-376 (nucleophile; for glutamine hydrolysis) is an active-site residue. Residues 377-380 (LGMQ), Glu-400, and Arg-460 contribute to the L-glutamine site. Catalysis depends on residues His-507 and Glu-509.

Belongs to the CTP synthase family. As to quaternary structure, homotetramer.

The enzyme catalyses UTP + L-glutamine + ATP + H2O = CTP + L-glutamate + ADP + phosphate + 2 H(+). The catalysed reaction is L-glutamine + H2O = L-glutamate + NH4(+). It carries out the reaction UTP + NH4(+) + ATP = CTP + ADP + phosphate + 2 H(+). It participates in pyrimidine metabolism; CTP biosynthesis via de novo pathway; CTP from UDP: step 2/2. Allosterically activated by GTP, when glutamine is the substrate; GTP has no effect on the reaction when ammonia is the substrate. The allosteric effector GTP functions by stabilizing the protein conformation that binds the tetrahedral intermediate(s) formed during glutamine hydrolysis. Inhibited by the product CTP, via allosteric rather than competitive inhibition. Its function is as follows. Catalyzes the ATP-dependent amination of UTP to CTP with either L-glutamine or ammonia as the source of nitrogen. Regulates intracellular CTP levels through interactions with the four ribonucleotide triphosphates. In Tropheryma whipplei (strain Twist) (Whipple's bacillus), this protein is CTP synthase.